The sequence spans 340 residues: Ferredoxin--NADP reductase (340 aa).

Positions 33, 41, 46, 86, 120, 286, and 327 each coordinate FAD.

The protein belongs to the ferredoxin--NADP reductase type 2 family. Homodimer. It depends on FAD as a cofactor.

The catalysed reaction is 2 reduced [2Fe-2S]-[ferredoxin] + NADP(+) + H(+) = 2 oxidized [2Fe-2S]-[ferredoxin] + NADPH. In Rickettsia rickettsii (strain Sheila Smith), this protein is Ferredoxin--NADP reductase.